A 387-amino-acid chain; its full sequence is 3-ketoacyl-CoA thiolase (387 aa).

Catalysis depends on Cys91, which acts as the Acyl-thioester intermediate. Catalysis depends on proton acceptor residues His343 and Cys373.

It belongs to the thiolase-like superfamily. Thiolase family. In terms of assembly, heterotetramer of two alpha chains (FadB) and two beta chains (FadA).

Its subcellular location is the cytoplasm. It carries out the reaction an acyl-CoA + acetyl-CoA = a 3-oxoacyl-CoA + CoA. It participates in lipid metabolism; fatty acid beta-oxidation. In terms of biological role, catalyzes the final step of fatty acid oxidation in which acetyl-CoA is released and the CoA ester of a fatty acid two carbons shorter is formed. The protein is 3-ketoacyl-CoA thiolase of Enterobacter sp. (strain 638).